We begin with the raw amino-acid sequence, 235 residues long: Putative cobalt transport protein CbiM 2 (235 aa).

Transmembrane regions (helical) follow at residues 9–29 (PAGW…MGII), 41–61 (YLPL…LKLP), 80–100 (FGYC…ALLL), 107–127 (TMGA…YAVY), 135–155 (INIY…TYII), 160–180 (LALA…AFFS), and 181–201 (IFAI…ALVF).

This sequence belongs to the CbiM family. As to quaternary structure, forms an energy-coupling factor (ECF) transporter complex composed of an ATP-binding protein (A component, CbiO), a transmembrane protein (T component, CbiQ) and 2 possible substrate-capture proteins (S components, CbiM and CbiN) of unknown stoichimetry.

Its subcellular location is the cell membrane. It participates in cofactor biosynthesis; adenosylcobalamin biosynthesis. Part of the energy-coupling factor (ECF) transporter complex CbiMNOQ involved in cobalt import. This is Putative cobalt transport protein CbiM 2 from Methanosphaerula palustris (strain ATCC BAA-1556 / DSM 19958 / E1-9c).